The primary structure comprises 873 residues: Protein SEY1 (873 aa).

Residues 1 to 21 (MVANGHFAGSADGQDSSSYEH) are disordered. Topologically, residues 1–749 (MVANGHFAGS…KRSAIGGITQ (749 aa)) are cytoplasmic. Positions 49-307 (GFNYHLISVF…IPADGFAVYA (259 aa)) constitute a GB1/RHD3-type G domain. Residue 59-66 (GSQSTGKS) participates in GTP binding. Residues 482-506 (SNYQQELSLYQKDLERTSGQLRRDE) are a coiled coil. The interval 676-703 (LDKWIGHTPSSATPADEEDLTPIGGVDD) is disordered. Residues 690–703 (ADEEDLTPIGGVDD) show a composition bias toward acidic residues. Residues 750 to 770 (VPLYFYGLLFALGWNEILAVL) traverse the membrane as a helical segment. The Lumenal segment spans residues 771–773 (RNP). Residues 774-794 (VYFLLLFVCAIGAYITYQLNL) form a helical membrane-spanning segment. Residues 795-873 (WGPIIKMTEA…EDVDDDDDDF (79 aa)) are Cytoplasmic-facing. The interval 828–873 (RQAMAMSGARNATEEHEMSRLSRKPAERGGRKNRADEDVDDDDDDF) is disordered. Residues 839–863 (ATEEHEMSRLSRKPAERGGRKNRAD) show a composition bias toward basic and acidic residues. The segment covering 864–873 (EDVDDDDDDF) has biased composition (acidic residues).

Belongs to the TRAFAC class dynamin-like GTPase superfamily. GB1/RHD3 GTPase family. RHD3 subfamily.

The protein resides in the endoplasmic reticulum membrane. In terms of biological role, cooperates with the reticulon proteins and tubule-shaping DP1 family proteins to generate and maintain the structure of the tubular endoplasmic reticulum network. Has GTPase activity, which is required for its function in ER organization. This Ajellomyces capsulatus (strain G186AR / H82 / ATCC MYA-2454 / RMSCC 2432) (Darling's disease fungus) protein is Protein SEY1.